Here is an 800-residue protein sequence, read N- to C-terminus: DNA topoisomerase 4 subunit A (800 aa).

The region spanning 31 to 495 (LPDVRDGLKP…EIEEIKIDKE (465 aa)) is the Topo IIA-type catalytic domain. The active-site O-(5'-phospho-DNA)-tyrosine intermediate is the Tyr119.

The protein belongs to the type II topoisomerase GyrA/ParC subunit family. ParC type 2 subfamily. As to quaternary structure, heterotetramer composed of ParC and ParE.

It is found in the cell membrane. The catalysed reaction is ATP-dependent breakage, passage and rejoining of double-stranded DNA.. In terms of biological role, topoisomerase IV is essential for chromosome segregation. It relaxes supercoiled DNA. Performs the decatenation events required during the replication of a circular DNA molecule. The protein is DNA topoisomerase 4 subunit A of Staphylococcus aureus (strain MW2).